The sequence spans 82 residues: Turripeptide IX-07 (82 aa).

The N-terminal stretch at 1–21 (MGFYMLLTVALLLTSLMNVEA) is a signal peptide. The propeptide occupies 22 to 39 (TPVNQAERSALEKSGLGN). Cystine bridges form between Cys-48/Cys-70, Cys-55/Cys-74, and Cys-60/Cys-81.

Expressed by the venom duct.

Its subcellular location is the secreted. This Gemmula speciosa (Splendid gem-turris) protein is Turripeptide IX-07.